A 1119-amino-acid polypeptide reads, in one-letter code: Solute carrier family 38 member 10 (1119 aa).

Helical transmembrane passes span 4 to 24 (AAAS…GVSV), 36 to 58 (IVLG…MFLV), 84 to 104 (LVET…YVVI), 120 to 140 (VGGT…VLPL), 153 to 173 (FSAM…LSSL), 229 to 249 (IFAS…FFGY), 272 to 292 (MLRV…ILPC), 323 to 343 (ALTL…PNVE), 345 to 365 (ILGL…PALI), and 378 to 398 (VVLW…LSVS). 2 disordered regions span residues 438 to 691 (AEDG…EEAG) and 731 to 1071 (KEIH…DGVI). Basic and acidic residues-rich tracts occupy residues 439–454 (EDGR…REEL), 466–475 (PGREDGKEAP), 493–522 (EAHR…ENKP), 544–559 (DSER…EVGK), and 592–603 (AKEDLGPGDRGL). The residue at position 612 (Ser612) is a Phosphoserine. A compositionally biased stretch (pro residues) spans 652-667 (PPLPAEKPAPGPGLPP). 3 stretches are compositionally biased toward basic and acidic residues: residues 668–677 (EPREQRDVER), 731–752 (KEIH…EVHQ), and 763–773 (EAPEGKARETV). Thr772 carries the post-translational modification Phosphothreonine. Position 802 is a phosphoserine (Ser802). 2 stretches are compositionally biased toward basic and acidic residues: residues 832–841 (KLRDGQKDAA) and 863–876 (PARE…RLAE). The segment covering 880–889 (GQSQDVTGGS) has biased composition (polar residues). A phosphoserine mark is found at Ser889, Ser965, and Ser997. Basic and acidic residues-rich tracts occupy residues 975 to 1005 (HRLD…RGGE), 1012 to 1022 (PRQRPEPELGL), and 1033 to 1042 (DNAKPNRDLK).

Belongs to the amino acid/polyamine transporter 2 family.

The protein resides in the membrane. The catalysed reaction is L-glutamate(out) = L-glutamate(in). It carries out the reaction L-glutamine(out) = L-glutamine(in). The enzyme catalyses L-alanine(in) = L-alanine(out). It catalyses the reaction L-serine(in) = L-serine(out). The catalysed reaction is L-leucine(in) = L-leucine(out). In terms of biological role, facilitates bidirectional transport of amino acids. May act as a glutamate sensor that regulates glutamate-glutamine cycle and mTOR signaling in the brain. The transport mechanism remains to be elucidated. In Homo sapiens (Human), this protein is Solute carrier family 38 member 10.